A 415-amino-acid polypeptide reads, in one-letter code: Gamma-glutamyl phosphate reductase (415 aa).

Belongs to the gamma-glutamyl phosphate reductase family.

The protein localises to the cytoplasm. The enzyme catalyses L-glutamate 5-semialdehyde + phosphate + NADP(+) = L-glutamyl 5-phosphate + NADPH + H(+). It functions in the pathway amino-acid biosynthesis; L-proline biosynthesis; L-glutamate 5-semialdehyde from L-glutamate: step 2/2. In terms of biological role, catalyzes the NADPH-dependent reduction of L-glutamate 5-phosphate into L-glutamate 5-semialdehyde and phosphate. The product spontaneously undergoes cyclization to form 1-pyrroline-5-carboxylate. In Thermotoga maritima (strain ATCC 43589 / DSM 3109 / JCM 10099 / NBRC 100826 / MSB8), this protein is Gamma-glutamyl phosphate reductase.